A 198-amino-acid polypeptide reads, in one-letter code: Syndecan-4 (198 aa).

The N-terminal stretch at 1–18 (MAPARLFALLLFFVGGVA) is a signal peptide. Residues 19-145 (ESIRETEVID…QGSNIFERTE (127 aa)) lie on the Extracellular side of the membrane. Ser-39, Ser-61, and Ser-63 each carry an O-linked (Xyl...) (glycosaminoglycan) serine glycan. O-linked (Xyl...) (chondroitin sulfate) serine glycosylation occurs at Ser-95. A helical transmembrane segment spans residues 146-170 (VLAALIVGGIVGILFAVFLILLLMY). The Cytoplasmic segment spans residues 171–198 (RMKKKDEGSYDLGKKPIYKKAPTNEFYA).

This sequence belongs to the syndecan proteoglycan family. As to quaternary structure, homodimer. Interacts (via its cytoplasmic domain) with GIPC (via its PDZ domain). Interacts (via its cytoplasmic domain) with NUDT16L1. Interacts with CDCP1 and SDCBP. Interacts with DNM2; this interaction is markedly enhanced at focal ahesion site upon induction of focal adhesions and stress-fiber formation. Post-translationally, shedding is enhanced by a number of factors such as heparanase, thrombin or EGF. Also by stress and wound healing. PMA-mediated shedding is inhibited by TIMP3. In terms of processing, O-glycosylated; contains both chondroitin sulfate and heparan sulfate. Ser-39, Ser-61 and Ser-63 can all be modified by either chondroitin sulfate or heparan sulfate, and the protein exists in forms that contain only chondroitin sulfate, only heparan sulfate and both chondroitin sulfate and heparan sulfate. In terms of tissue distribution, detected in fibroblasts (at protein level). Also expressed in epithelial cells.

It localises to the membrane. The protein localises to the secreted. Cell surface proteoglycan which regulates exosome biogenesis in concert with SDCBP and PDCD6IP. This Homo sapiens (Human) protein is Syndecan-4.